The primary structure comprises 413 residues: Putative competence-damage inducible protein (413 aa).

This sequence belongs to the CinA family.

In Thermoanaerobacter pseudethanolicus (strain ATCC 33223 / 39E) (Clostridium thermohydrosulfuricum), this protein is Putative competence-damage inducible protein.